Reading from the N-terminus, the 382-residue chain is Serine/threonine-protein kinase (382 aa).

Residues 1 to 10 (MENKQCDHLT) show a composition bias toward basic and acidic residues. Residues 1–75 (MENKQCDHLT…ASESDEDDDD (75 aa)) are disordered. Residues 12–24 (WFSTTSDASESMD) are compositionally biased toward polar residues. The segment covering 45–75 (ADEDLYSDISEGDLEYSDCDSASESDEDDDD) has biased composition (acidic residues). Residues 93-379 (YTVIKTLTPG…AEELLSYPMF (287 aa)) form the Protein kinase domain. ATP is bound by residues 99 to 107 (LTPGSEGRV) and K122. D207 serves as the catalytic Proton acceptor.

Belongs to the protein kinase superfamily. Ser/Thr protein kinase family.

The enzyme catalyses L-seryl-[protein] + ATP = O-phospho-L-seryl-[protein] + ADP + H(+). The catalysed reaction is L-threonyl-[protein] + ATP = O-phospho-L-threonyl-[protein] + ADP + H(+). The protein is Serine/threonine-protein kinase (US2) of Equus caballus (Horse).